Here is a 248-residue protein sequence, read N- to C-terminus: Adenosylcobinamide-GDP ribazoletransferase (248 aa).

7 consecutive transmembrane segments (helical) span residues 24–44 (EINL…IGAW), 70–90 (IIIT…GLFS), 106–126 (VGAN…ALFL), 134–154 (IGWL…LLFA), 168–188 (IFLG…LVAL), 189–209 (GAFF…FTII), and 228–248 (AGGQ…WGLI).

Belongs to the CobS family. Mg(2+) is required as a cofactor.

It localises to the cell membrane. It carries out the reaction alpha-ribazole + adenosylcob(III)inamide-GDP = adenosylcob(III)alamin + GMP + H(+). It catalyses the reaction alpha-ribazole 5'-phosphate + adenosylcob(III)inamide-GDP = adenosylcob(III)alamin 5'-phosphate + GMP + H(+). The protein operates within cofactor biosynthesis; adenosylcobalamin biosynthesis; adenosylcobalamin from cob(II)yrinate a,c-diamide: step 7/7. Functionally, joins adenosylcobinamide-GDP and alpha-ribazole to generate adenosylcobalamin (Ado-cobalamin). Also synthesizes adenosylcobalamin 5'-phosphate from adenosylcobinamide-GDP and alpha-ribazole 5'-phosphate. This is Adenosylcobinamide-GDP ribazoletransferase from Listeria monocytogenes serotype 4a (strain HCC23).